Reading from the N-terminus, the 266-residue chain is Elongator complex protein 6 (266 aa).

Belongs to the ELP6 family. In terms of assembly, component of the elongator complex which consists of ELP1, ELP2, ELP3, ELP4, ELP5 and ELP6.

The protein localises to the cytoplasm. It localises to the nucleus. The protein operates within tRNA modification; 5-methoxycarbonylmethyl-2-thiouridine-tRNA biosynthesis. Its function is as follows. Component of the elongator complex which is required for multiple tRNA modifications, including mcm5U (5-methoxycarbonylmethyl uridine), mcm5s2U (5-methoxycarbonylmethyl-2-thiouridine), and ncm5U (5-carbamoylmethyl uridine). The elongator complex catalyzes formation of carboxymethyluridine in the wobble base at position 34 in tRNAs. Involved in cell migration. The protein is Elongator complex protein 6 of Homo sapiens (Human).